Here is a 1414-residue protein sequence, read N- to C-terminus: Calcium-transporting ATPase 2 (1414 aa).

2 disordered regions span residues 1 to 231 (MSRN…PSRL) and 265 to 294 (AVGTDEGNAENGAPRSSADMPGGNGPQWRA). At 1 to 327 (MSRNNPPPVI…LLMWLAFKDK (327 aa)) the chain is on the cytoplasmic side. Low complexity-rich tracts occupy residues 33–53 (PTPTLVIPGSPASESSHPESP) and 75–96 (SPTPSYSSALTPPSPTLTSSSS). Basic and acidic residues predominate over residues 179-189 (DGDRGEDDANK). The span at 190–201 (KGKKDKKGKKGK) shows a compositional bias: basic residues. Residues 202 to 229 (KDKEEPPSAHLDPDKDKTDPTPFREKPS) show a composition bias toward basic and acidic residues. The helical transmembrane segment at 328-348 (VLILLSVAAVVSLALGLYQDL) threads the bilayer. The Vacuolar segment spans residues 349 to 370 (GTPPKIIYNDECPDGCEEAQVD). The chain crosses the membrane as a helical span at residues 371 to 391 (WVEGVAIVVAIIIVVLVGSIN). The Cytoplasmic segment spans residues 392–541 (DWQKERQFKK…TPLQIKLNHL (150 aa)). The chain crosses the membrane as a helical span at residues 542–562 (AELIAKLGGASGLLLFIALMI). Over 563-585 (RFFVQLKTNPDRSANDKAQSFIQ) the chain is Vacuolar. A helical transmembrane segment spans residues 586-606 (ILIIAVTLVVVAVPEGLPLAV). Ca(2+)-binding residues include Val595 and Glu600. Residues 607–1040 (TLALAFATKR…GRCVNDSVKK (434 aa)) lie on the Cytoplasmic side of the membrane. The active-site 4-aspartylphosphate intermediate is Asp642. Residues Asp642 and Thr644 each coordinate Mg(2+). Residues Thr644, Glu737, Arg779, 909–911 (TGD), Arg958, and Lys964 contribute to the ATP site. Asp983 is a Mg(2+) binding site. Asn986 is a binding site for ATP. A helical transmembrane segment spans residues 1041–1061 (FLQFQISVNITAVFITFISAV). Asn1049 serves as a coordination point for Ca(2+). Residues 1062-1068 (ASSSEES) are Vacuolar-facing. Residues 1069-1089 (VLTAVQLLWVNLIMDTFAALA) traverse the membrane as a helical segment. Ca(2+) contacts are provided by Asn1079 and Asp1083. Topologically, residues 1090–1118 (LATDPATESSLDRKPDRKNAPLITVEMFK) are cytoplasmic. Residues 1119 to 1139 (MIMVQAIYQIIVCLVLHFAGL) form a helical membrane-spanning segment. Residues 1140-1153 (KILGLEDNDQNNTE) lie on the Vacuolar side of the membrane. A helical membrane pass occupies residues 1154–1171 (LGALVFNCFVFCQIFNQL). Over 1172 to 1191 (NCRRLDRKLNVLEGFWRNWY) the chain is Cytoplasmic. A helical membrane pass occupies residues 1192–1212 (FIIIFLIMVGGQILIVEVGGA). Glu1208 provides a ligand contact to Ca(2+). Over 1213–1223 (AFQVTRLGGRD) the chain is Vacuolar. A helical membrane pass occupies residues 1224-1244 (WGITLVIGALSLPIGALVRLT). Residues 1245–1414 (PTGPFARLLV…GLSSGDANNV (170 aa)) are Cytoplasmic-facing. The interval 1376–1414 (PRTNPDDPLYAKFGLQPPESRGSSVSGAEGLSSGDANNV) is disordered.

It belongs to the cation transport ATPase (P-type) (TC 3.A.3) family.

It is found in the vacuole membrane. It catalyses the reaction Ca(2+)(in) + ATP + H2O = Ca(2+)(out) + ADP + phosphate + H(+). Its function is as follows. This magnesium-dependent enzyme catalyzes the hydrolysis of ATP coupled with the transport of calcium. Transports calcium to the vacuole and participates in the control of cytosolic free calcium. The chain is Calcium-transporting ATPase 2 from Cryptococcus neoformans var. grubii serotype A (strain H99 / ATCC 208821 / CBS 10515 / FGSC 9487) (Filobasidiella neoformans var. grubii).